Reading from the N-terminus, the 493-residue chain is Lysine--tRNA ligase (493 aa).

The Mg(2+) site is built by E406 and E413.

Belongs to the class-II aminoacyl-tRNA synthetase family. In terms of assembly, homodimer. Requires Mg(2+) as cofactor.

It is found in the cytoplasm. It carries out the reaction tRNA(Lys) + L-lysine + ATP = L-lysyl-tRNA(Lys) + AMP + diphosphate. This chain is Lysine--tRNA ligase, found in Leuconostoc citreum (strain KM20).